The sequence spans 464 residues: Asparagine--tRNA ligase (464 aa).

This sequence belongs to the class-II aminoacyl-tRNA synthetase family. Homodimer.

It is found in the cytoplasm. It catalyses the reaction tRNA(Asn) + L-asparagine + ATP = L-asparaginyl-tRNA(Asn) + AMP + diphosphate + H(+). The chain is Asparagine--tRNA ligase from Clostridium botulinum (strain Alaska E43 / Type E3).